A 544-amino-acid chain; its full sequence is CTP synthase (544 aa).

The tract at residues 1 to 267 (MAKFVFVTGG…CRQVLDVLSL (267 aa)) is amidoligase domain. Ser13 is a binding site for CTP. Ser13 is a UTP binding site. Residues 14–19 (SIGKGI) and Asp71 contribute to the ATP site. Mg(2+) contacts are provided by Asp71 and Glu141. Residues 148–150 (DIE), 188–193 (KTKPTQ), and Lys224 contribute to the CTP site. Residues 188–193 (KTKPTQ) and Lys224 contribute to the UTP site. The region spanning 292–534 (KVALVGKYVQ…IQAASQRLPQ (243 aa)) is the Glutamine amidotransferase type-1 domain. Gly354 lines the L-glutamine pocket. Cys381 functions as the Nucleophile; for glutamine hydrolysis in the catalytic mechanism. Residues 382-385 (LGMQ), Glu405, and Arg462 contribute to the L-glutamine site. Active-site residues include His507 and Glu509.

Belongs to the CTP synthase family. Homotetramer.

The enzyme catalyses UTP + L-glutamine + ATP + H2O = CTP + L-glutamate + ADP + phosphate + 2 H(+). The catalysed reaction is L-glutamine + H2O = L-glutamate + NH4(+). It carries out the reaction UTP + NH4(+) + ATP = CTP + ADP + phosphate + 2 H(+). It participates in pyrimidine metabolism; CTP biosynthesis via de novo pathway; CTP from UDP: step 2/2. With respect to regulation, allosterically activated by GTP, when glutamine is the substrate; GTP has no effect on the reaction when ammonia is the substrate. The allosteric effector GTP functions by stabilizing the protein conformation that binds the tetrahedral intermediate(s) formed during glutamine hydrolysis. Inhibited by the product CTP, via allosteric rather than competitive inhibition. In terms of biological role, catalyzes the ATP-dependent amination of UTP to CTP with either L-glutamine or ammonia as the source of nitrogen. Regulates intracellular CTP levels through interactions with the four ribonucleotide triphosphates. This chain is CTP synthase, found in Synechococcus sp. (strain RCC307).